Reading from the N-terminus, the 287-residue chain is MLKRIQQKWLAIKLITRMDKPIGTYLLLWPTYWALWIASDGWPNLQLLLVFSLGVFIMRSAGCVINDYADRKIDGEVERTKNRPLVNGMMTSGEAINLFGVLIGMAFGLVLMLSWSTIYLSVVAVLLAAIYPFMKRHTQLPQLFLGAAFSWGMIMAFSEAQGEIPLVAWLLFTANLCWTIAYDTMYAMVDRDDDVKIGVKSTAILFAENDKRVIGFLQLMTLALLWTVGDILAFGWPYQLCIIAAAGLFSYQQLLIVNRERDACFQAFLHNHWVGLVVFVGIAIEYL.

Helical transmembrane passes span 22–42 (IGTY…SDGW), 45–65 (LQLL…GCVI), 95–115 (AINL…MLSW), 116–136 (STIY…FMKR), 140–160 (LPQL…FSEA), 162–182 (GEIP…TIAY), 214–234 (IGFL…ILAF), 237–257 (PYQL…LLIV), and 264–284 (CFQA…GIAI).

Belongs to the UbiA prenyltransferase family. The cofactor is Mg(2+).

Its subcellular location is the cell inner membrane. The catalysed reaction is all-trans-octaprenyl diphosphate + 4-hydroxybenzoate = 4-hydroxy-3-(all-trans-octaprenyl)benzoate + diphosphate. Its pathway is cofactor biosynthesis; ubiquinone biosynthesis. In terms of biological role, catalyzes the prenylation of para-hydroxybenzoate (PHB) with an all-trans polyprenyl group. Mediates the second step in the final reaction sequence of ubiquinone-8 (UQ-8) biosynthesis, which is the condensation of the polyisoprenoid side chain with PHB, generating the first membrane-bound Q intermediate 3-octaprenyl-4-hydroxybenzoate. This Colwellia psychrerythraea (strain 34H / ATCC BAA-681) (Vibrio psychroerythus) protein is 4-hydroxybenzoate octaprenyltransferase.